The sequence spans 189 residues: Rho-related protein racM (189 aa).

A GTP-binding site is contributed by 12-19; that stretch reads GDYGVGKT. The short motif at 35-43 is the Effector region element; the sequence is YVPTALDNF. Residues 60–64 and 118–121 contribute to the GTP site; these read DTAGG and TKID. At cysteine 186 the chain carries Cysteine methyl ester. Cysteine 186 is lipidated: S-geranylgeranyl cysteine. A propeptide spans 187 to 189 (removed in mature form); it reads IIL.

This sequence belongs to the small GTPase superfamily. Rho family.

It localises to the cell membrane. In Dictyostelium discoideum (Social amoeba), this protein is Rho-related protein racM (racM).